A 226-amino-acid chain; its full sequence is MNSQGSDRKAVTLLLLVMSNLLFCQNAHPLPICPGGNCQMPLQELFDRVIMLSHYIYMLSADMFIELDKQYAQDHEFIAKAISDCPTSSLATPEGKEEAQQVPPEVLLNLILSLVHSWNDPLFQLVTEVDGIHEASDAIISRAKEIGEQNKRLLEGIEKILGQAYPEAKGNEIYSVWSQFPSLQGVDEESRDLAIYNKVRCLRRDSHKVDNYLKLLRCRVVHNNNC.

An N-terminal signal peptide occupies residues 1–29 (MNSQGSDRKAVTLLLLVMSNLLFCQNAHP). C33 and C38 form a disulfide bridge. 2 positions are modified to phosphoserine: S53 and S117. 2 disulfides stabilise this stretch: C85/C201 and C218/C226.

This sequence belongs to the somatotropin/prolactin family. In terms of assembly, interacts with PRLR.

The protein resides in the secreted. Its function is as follows. Prolactin acts primarily on the mammary gland by promoting lactation. This Mesocricetus auratus (Golden hamster) protein is Prolactin (PRL).